The chain runs to 514 residues: ATP synthase subunit alpha (514 aa).

ATP is bound at residue 170–177 (GDRQIGKT).

This sequence belongs to the ATPase alpha/beta chains family. In terms of assembly, F-type ATPases have 2 components, CF(1) - the catalytic core - and CF(0) - the membrane proton channel. CF(1) has five subunits: alpha(3), beta(3), gamma(1), delta(1), epsilon(1). CF(0) has three main subunits: a(1), b(2) and c(9-12). The alpha and beta chains form an alternating ring which encloses part of the gamma chain. CF(1) is attached to CF(0) by a central stalk formed by the gamma and epsilon chains, while a peripheral stalk is formed by the delta and b chains.

It is found in the cell inner membrane. It carries out the reaction ATP + H2O + 4 H(+)(in) = ADP + phosphate + 5 H(+)(out). Its function is as follows. Produces ATP from ADP in the presence of a proton gradient across the membrane. The alpha chain is a regulatory subunit. The polypeptide is ATP synthase subunit alpha (Pseudomonas putida (strain ATCC 700007 / DSM 6899 / JCM 31910 / BCRC 17059 / LMG 24140 / F1)).